We begin with the raw amino-acid sequence, 495 residues long: Cytochrome P450 monooxygenase cnsC (495 aa).

Position 434 (Cys434) interacts with heme.

The protein belongs to the cytochrome P450 family. It depends on heme as a cofactor.

It functions in the pathway alkaloid biosynthesis. Functionally, cytochrome P450 monooxygenase; part of the gene cluster that mediates the biosynthesis of communesins, a prominent class of indole alkaloids with great potential as pharmaceuticals. Communesins are biosynthesized by the coupling of tryptamine and aurantioclavine, two building blocks derived from L-tryptophan. The L-tryptophan decarboxylase cnsB converts L-tryptophan to tryptamine, whereas the tryptophan dimethylallyltransferase cnsF converts L-tryptophan to 4-dimethylallyl tryptophan which is further transformed to aurantioclavine by the aurantioclavine synthase cnsA, probably aided by the catalase cnsD. The cytochrome P450 monooxygenase cnsC catalyzes the heterodimeric coupling between the two different indole moieties, tryptamine and aurantioclavine, to construct vicinal quaternary stereocenters and yield the heptacyclic communesin scaffold. The O-methyltransferase cnsE then methylates the communesin scaffold to produce communesin K, the simplest characterized communesin that contains the heptacyclic core. The dioxygenase cnsJ converts communesin K into communesin I. Acylation to introduce the hexadienyl group at position N16 of communesin I by the acyltransferase cnsK leads to the production of communesin B. The hexadienyl group is produced by the highly reducing polyketide synthase cnsI, before being hydrolytically removed from cnsI by the serine hydrolase cnsH, converted into hexadienyl-CoA by the CoA ligase cnsG, and then transferred to communesin I by cnsK. Surprisingly, cnsK may also be a promiscuous acyltransferase that can tolerate a range of acyl groups, including acetyl-, propionyl-, and butyryl-CoA, which lead to communesins A, G and H respectively. The roles of the alpha-ketoglutarate-dependent dioxygenases cnsM and cnsP have still to be determined. The sequence is that of Cytochrome P450 monooxygenase cnsC from Penicillium expansum (Blue mold rot fungus).